The following is a 584-amino-acid chain: Arginine--tRNA ligase (584 aa).

Residues 127 to 137 (PNTNKPLHIGH) carry the 'HIGH' region motif.

Belongs to the class-I aminoacyl-tRNA synthetase family. Monomer.

Its subcellular location is the cytoplasm. The catalysed reaction is tRNA(Arg) + L-arginine + ATP = L-arginyl-tRNA(Arg) + AMP + diphosphate. This Borrelia hermsii (strain HS1 / DAH) protein is Arginine--tRNA ligase.